Reading from the N-terminus, the 211-residue chain is Large ribosomal subunit protein bL25 (211 aa).

The protein belongs to the bacterial ribosomal protein bL25 family. CTC subfamily. Part of the 50S ribosomal subunit; part of the 5S rRNA/L5/L18/L25 subcomplex. Contacts the 5S rRNA. Binds to the 5S rRNA independently of L5 and L18.

This is one of the proteins that binds to the 5S RNA in the ribosome where it forms part of the central protuberance. The polypeptide is Large ribosomal subunit protein bL25 (Anaplasma phagocytophilum (strain HZ)).